The primary structure comprises 442 residues: Glutamyl-tRNA reductase (442 aa).

Substrate is bound by residues 49 to 52, serine 109, 114 to 116, and glutamine 120; these read TCNR and EGQ. Cysteine 50 serves as the catalytic Nucleophile. Position 198–203 (198–203) interacts with NADP(+); the sequence is GAGRMA. The interval 420-442 is disordered; sequence MAAAQRLFDLPGDDADRDRSDAK. The span at 433-442 shows a compositional bias: basic and acidic residues; the sequence is DADRDRSDAK.

This sequence belongs to the glutamyl-tRNA reductase family. Homodimer.

The catalysed reaction is (S)-4-amino-5-oxopentanoate + tRNA(Glu) + NADP(+) = L-glutamyl-tRNA(Glu) + NADPH + H(+). The protein operates within porphyrin-containing compound metabolism; protoporphyrin-IX biosynthesis; 5-aminolevulinate from L-glutamyl-tRNA(Glu): step 1/2. It participates in porphyrin-containing compound metabolism; chlorophyll biosynthesis. Catalyzes the NADPH-dependent reduction of glutamyl-tRNA(Glu) to glutamate 1-semialdehyde (GSA). The sequence is that of Glutamyl-tRNA reductase from Synechococcus sp. (strain RCC307).